Here is a 558-residue protein sequence, read N- to C-terminus: Putative ABC transporter ATP-binding protein SAG1633 (558 aa).

2 ABC transporter domains span residues 5 to 246 (IEWK…GIRE) and 295 to 527 (LSVQ…THLK). Residues 39-46 (GPSGSGKS) and 328-335 (GKNGAGKS) each bind ATP.

This sequence belongs to the ABC transporter superfamily.

It localises to the cell membrane. Functionally, probably part of an ABC transporter complex. Responsible for energy coupling to the transport system. The protein is Putative ABC transporter ATP-binding protein SAG1633 of Streptococcus agalactiae serotype V (strain ATCC BAA-611 / 2603 V/R).